We begin with the raw amino-acid sequence, 262 residues long: Thiazole synthase (262 aa).

Catalysis depends on Lys96, which acts as the Schiff-base intermediate with DXP. Residues Gly157, 184 to 185, and 206 to 207 contribute to the 1-deoxy-D-xylulose 5-phosphate site; these read AG and NT.

This sequence belongs to the ThiG family. Homotetramer. Forms heterodimers with either ThiH or ThiS.

The protein resides in the cytoplasm. The catalysed reaction is [ThiS sulfur-carrier protein]-C-terminal-Gly-aminoethanethioate + 2-iminoacetate + 1-deoxy-D-xylulose 5-phosphate = [ThiS sulfur-carrier protein]-C-terminal Gly-Gly + 2-[(2R,5Z)-2-carboxy-4-methylthiazol-5(2H)-ylidene]ethyl phosphate + 2 H2O + H(+). Its pathway is cofactor biosynthesis; thiamine diphosphate biosynthesis. Functionally, catalyzes the rearrangement of 1-deoxy-D-xylulose 5-phosphate (DXP) to produce the thiazole phosphate moiety of thiamine. Sulfur is provided by the thiocarboxylate moiety of the carrier protein ThiS. In vitro, sulfur can be provided by H(2)S. This Legionella pneumophila (strain Paris) protein is Thiazole synthase.